The following is a 159-amino-acid chain: U1 small nuclear ribonucleoprotein C (159 aa).

The Matrin-type zinc-finger motif lies at 4-36 (FYCDYCDTYLTHDSPSVRKTHCSGRKHKENVKD). 2 disordered regions span residues 63 to 95 (PPTPFAAPPAGSAMIPPPPSLGGPPRPGMMPAP) and 139 to 159 (MRPPTRPMMLQSRPGMARPDR). A compositionally biased stretch (pro residues) spans 77–95 (IPPPPSLGGPPRPGMMPAP).

It belongs to the U1 small nuclear ribonucleoprotein C family. In terms of assembly, component of the U1 snRNP. The U1 snRNP is composed of the U1 snRNA and the 7 core Sm proteins snrpb, snrpd1, snrpd2, snrpd3, snrpe, snrpf and snrpg that assemble in a heptameric protein ring on the Sm site of the small nuclear RNA to form the core snRNP, and at least 3 U1 snRNP-specific proteins snrnp70/U1-70K, snrpa/U1-A and snrpc/U1-C. snrpc/U1-C interacts with U1 snRNA and the 5' splice-site region of the pre-mRNA.

It is found in the nucleus. In terms of biological role, component of the spliceosomal U1 snRNP, which is essential for recognition of the pre-mRNA 5' splice-site and the subsequent assembly of the spliceosome. SNRPC/U1-C is directly involved in initial 5' splice-site recognition for both constitutive and regulated alternative splicing. The interaction with the 5' splice-site seems to precede base-pairing between the pre-mRNA and the U1 snRNA. Stimulates commitment or early (E) complex formation by stabilizing the base pairing of the 5' end of the U1 snRNA and the 5' splice-site region. The protein is U1 small nuclear ribonucleoprotein C of Xenopus laevis (African clawed frog).